The following is a 478-amino-acid chain: Cytochrome c-552 (478 aa).

The N-terminal stretch at 1–27 (MKKQWTRRSAAAIAMVTTLLLSSHSFA) is a signal peptide. Histidine 91 contacts heme c. Heme-binding residues include cysteine 119, cysteine 122, and lysine 123. Positions 157, 160, 161, 206, 209, and 210 each coordinate heme c. The Ca(2+) site is built by glutamate 212, tyrosine 213, lysine 258, and glutamine 260. A substrate-binding site is contributed by tyrosine 213. Histidine 261 contacts substrate. Residues histidine 272, cysteine 279, cysteine 282, histidine 283, histidine 298, cysteine 311, cysteine 314, histidine 315, and histidine 390 each coordinate heme c.

This sequence belongs to the cytochrome c-552 family. The cofactor is Ca(2+). Heme c serves as cofactor.

It is found in the periplasm. The catalysed reaction is 6 Fe(III)-[cytochrome c] + NH4(+) + 2 H2O = 6 Fe(II)-[cytochrome c] + nitrite + 8 H(+). It participates in nitrogen metabolism; nitrate reduction (assimilation). Functionally, catalyzes the reduction of nitrite to ammonia, consuming six electrons in the process. This chain is Cytochrome c-552, found in Aliivibrio salmonicida (strain LFI1238) (Vibrio salmonicida (strain LFI1238)).